A 398-amino-acid chain; its full sequence is Acetate kinase (398 aa).

Residue Asn-7 participates in Mg(2+) binding. ATP is bound at residue Lys-14. Arg-90 contributes to the substrate binding site. Residue Asp-147 is the Proton donor/acceptor of the active site. Residues 207–211 (HLGNG), 282–284 (DMR), and 330–334 (GIGEN) each bind ATP. Position 383 (Glu-383) interacts with Mg(2+).

This sequence belongs to the acetokinase family. In terms of assembly, homodimer. Requires Mg(2+) as cofactor. Mn(2+) serves as cofactor.

The protein resides in the cytoplasm. The catalysed reaction is acetate + ATP = acetyl phosphate + ADP. Its pathway is metabolic intermediate biosynthesis; acetyl-CoA biosynthesis; acetyl-CoA from acetate: step 1/2. Catalyzes the formation of acetyl phosphate from acetate and ATP. Can also catalyze the reverse reaction. The protein is Acetate kinase of Symbiobacterium thermophilum (strain DSM 24528 / JCM 14929 / IAM 14863 / T).